Reading from the N-terminus, the 301-residue chain is Sulfate adenylyltransferase subunit 2 1 (301 aa).

This sequence belongs to the PAPS reductase family. CysD subfamily. In terms of assembly, heterodimer composed of CysD, the smaller subunit, and CysN.

It catalyses the reaction sulfate + ATP + H(+) = adenosine 5'-phosphosulfate + diphosphate. It functions in the pathway sulfur metabolism; hydrogen sulfide biosynthesis; sulfite from sulfate: step 1/3. In terms of biological role, with CysN forms the ATP sulfurylase (ATPS) that catalyzes the adenylation of sulfate producing adenosine 5'-phosphosulfate (APS) and diphosphate, the first enzymatic step in sulfur assimilation pathway. APS synthesis involves the formation of a high-energy phosphoric-sulfuric acid anhydride bond driven by GTP hydrolysis by CysN coupled to ATP hydrolysis by CysD. In Shewanella sediminis (strain HAW-EB3), this protein is Sulfate adenylyltransferase subunit 2 1.